Consider the following 152-residue polypeptide: 1,4-dihydroxy-2-naphthoyl-CoA hydrolase (152 aa).

Asp20 is a catalytic residue.

This sequence belongs to the 4-hydroxybenzoyl-CoA thioesterase family. DHNA-CoA hydrolase subfamily.

It carries out the reaction 1,4-dihydroxy-2-naphthoyl-CoA + H2O = 1,4-dihydroxy-2-naphthoate + CoA + H(+). It participates in cofactor biosynthesis; phylloquinone biosynthesis. The protein operates within quinol/quinone metabolism; 1,4-dihydroxy-2-naphthoate biosynthesis; 1,4-dihydroxy-2-naphthoate from chorismate: step 7/7. Functionally, catalyzes the hydrolysis of 1,4-dihydroxy-2-naphthoyl-CoA (DHNA-CoA) to 1,4-dihydroxy-2-naphthoate (DHNA), a reaction involved in phylloquinone (vitamin K1) biosynthesis. This chain is 1,4-dihydroxy-2-naphthoyl-CoA hydrolase, found in Synechococcus sp. (strain CC9311).